The sequence spans 263 residues: tRNA (guanine-N(1)-)-methyltransferase (263 aa).

S-adenosyl-L-methionine contacts are provided by residues glycine 113 and 137 to 142 (LGDYVL).

It belongs to the RNA methyltransferase TrmD family. As to quaternary structure, homodimer.

The protein localises to the cytoplasm. It carries out the reaction guanosine(37) in tRNA + S-adenosyl-L-methionine = N(1)-methylguanosine(37) in tRNA + S-adenosyl-L-homocysteine + H(+). In terms of biological role, specifically methylates guanosine-37 in various tRNAs. This chain is tRNA (guanine-N(1)-)-methyltransferase, found in Renibacterium salmoninarum (strain ATCC 33209 / DSM 20767 / JCM 11484 / NBRC 15589 / NCIMB 2235).